A 252-amino-acid polypeptide reads, in one-letter code: Protein TRANSPARENT TESTA 16 (252 aa).

An MADS-box domain is found at M1 to Q61. Positions Q86 to A176 constitute a K-box domain. A coiled-coil region spans residues N121–R174.

In terms of assembly, interacts with AP1/AGL7, SEP1/AGL2, SEP2/AGL4, SEP3/AGL9 and AGL3/SEP4. Expressed in buds, flowers and immature seeds, but not in roots, stems, leaves, seedlings or siliques valves. Expression in seed coat is confined to the endothelium layer.

The protein resides in the nucleus. Its function is as follows. Transcription factor involved in the developmental regulation of the endothelium and in the accumulation of proanthocyanidins (PAs) or condensed tannins which give the seed its brown pigmentation after oxidation. Necessary for the normal activation of the BANYULS promoter in the endothelium body. Is required, together with AGL11/STK for the maternal control of endothelium formation, which is essential for female gametophyte development and fertilization, and seed formation. Interacts genetically with AGL1/SHP1 and AGL5/SHP2 in a partially antagonistic manner and represses AGL1/SHP1, AGL5/SHP2, and AGL8/FUL during flower development. Is essential for the coordination of cell divisions in ovule, seed coat development and endosperm formation. Mediates the crosstalk between endothelium and nucellus to ensure proper seed formation. Functions redundantly with AGL63/GOA to repress nucellus growth and promote its degeneration. Represses the negative regulator of autophagy and programmed cell death HVA22D in the proximal nucellus. Binds specifically to the CArG box DNA sequence 5'-CC (A/T)6 GG-3'. The protein is Protein TRANSPARENT TESTA 16 (TT16) of Arabidopsis thaliana (Mouse-ear cress).